Reading from the N-terminus, the 354-residue chain is UDP-3-O-acylglucosamine N-acyltransferase (354 aa).

His245 serves as the catalytic Proton acceptor.

The protein belongs to the transferase hexapeptide repeat family. LpxD subfamily. As to quaternary structure, homotrimer.

It carries out the reaction a UDP-3-O-[(3R)-3-hydroxyacyl]-alpha-D-glucosamine + a (3R)-hydroxyacyl-[ACP] = a UDP-2-N,3-O-bis[(3R)-3-hydroxyacyl]-alpha-D-glucosamine + holo-[ACP] + H(+). It functions in the pathway bacterial outer membrane biogenesis; LPS lipid A biosynthesis. Its function is as follows. Catalyzes the N-acylation of UDP-3-O-acylglucosamine using 3-hydroxyacyl-ACP as the acyl donor. Is involved in the biosynthesis of lipid A, a phosphorylated glycolipid that anchors the lipopolysaccharide to the outer membrane of the cell. This chain is UDP-3-O-acylglucosamine N-acyltransferase, found in Anaeromyxobacter sp. (strain K).